We begin with the raw amino-acid sequence, 341 residues long: Uroporphyrinogen decarboxylase (341 aa).

Residues 23-27 (RQAGR), Asp73, Tyr147, Ser202, and His318 each bind substrate.

This sequence belongs to the uroporphyrinogen decarboxylase family. As to quaternary structure, homodimer.

The protein localises to the cytoplasm. The catalysed reaction is uroporphyrinogen III + 4 H(+) = coproporphyrinogen III + 4 CO2. It participates in porphyrin-containing compound metabolism; protoporphyrin-IX biosynthesis; coproporphyrinogen-III from 5-aminolevulinate: step 4/4. Its function is as follows. Catalyzes the decarboxylation of four acetate groups of uroporphyrinogen-III to yield coproporphyrinogen-III. This is Uroporphyrinogen decarboxylase from Erythrobacter litoralis (strain HTCC2594).